Consider the following 205-residue polypeptide: Ras-related protein Rab-18-B (205 aa).

Residues serine 17, glycine 20, lysine 21, serine 22, serine 23, aspartate 34, proline 35, threonine 40, glycine 66, lysine 123, aspartate 125, and alanine 152 each contribute to the GTP site. Position 22 (serine 22) interacts with Mg(2+). 2 short sequence motifs (switch) span residues 31 to 45 and 63 to 80; these read DTFD…GVDF and DTAG…YYRG. Position 40 (threonine 40) interacts with Mg(2+). Cysteine 198 carries the S-palmitoyl cysteine lipid modification. Position 202 is a cysteine methyl ester (cysteine 202). Cysteine 202 carries the S-geranylgeranyl cysteine lipid modification. A propeptide spans 203-205 (removed in mature form); it reads SLV.

It belongs to the small GTPase superfamily. Rab family. Mg(2+) is required as a cofactor.

Its subcellular location is the endoplasmic reticulum membrane. It is found in the golgi apparatus. The protein localises to the cis-Golgi network membrane. The protein resides in the lipid droplet. It localises to the apical cell membrane. The enzyme catalyses GTP + H2O = GDP + phosphate + H(+). Regulated by guanine nucleotide exchange factors (GEFs) which promote the exchange of bound GDP for free GTP. Regulated by GTPase activating proteins (GAPs) which increase the GTP hydrolysis activity at the ER membrane. Inhibited by GDP dissociation inhibitors (GDIs) which prevent Rab-GDP dissociation. Functionally, the small GTPases Rab are key regulators of intracellular membrane trafficking, from the formation of transport vesicles to their fusion with membranes. Rabs cycle between an inactive GDP-bound form and an active GTP-bound form that is able to recruit to membranes different sets of downstream effectors directly responsible for vesicle formation, movement, tethering and fusion. Required for the localization of ZFYVE1 to lipid droplets and for its function in mediating the formation of endoplasmic reticulum-lipid droplets (ER-LD) contacts. Also required for maintaining endoplasmic reticulum structure. Plays a role in apical endocytosis/recycling. Plays a key role in eye and brain development and neurodegeneration. This chain is Ras-related protein Rab-18-B (rab18b), found in Danio rerio (Zebrafish).